Here is a 90-residue protein sequence, read N- to C-terminus: Large ribosomal subunit protein bL27 (90 aa).

Over residues 1–13 (MATKKSGGSSSNG) the composition is skewed to low complexity. The interval 1-20 (MATKKSGGSSSNGRDSRGRR) is disordered.

This sequence belongs to the bacterial ribosomal protein bL27 family.

This chain is Large ribosomal subunit protein bL27, found in Anaplasma marginale (strain Florida).